We begin with the raw amino-acid sequence, 683 residues long: Glycine--tRNA ligase beta subunit (683 aa).

This sequence belongs to the class-II aminoacyl-tRNA synthetase family. In terms of assembly, tetramer of two alpha and two beta subunits.

Its subcellular location is the cytoplasm. The catalysed reaction is tRNA(Gly) + glycine + ATP = glycyl-tRNA(Gly) + AMP + diphosphate. In Pseudomonas putida (strain GB-1), this protein is Glycine--tRNA ligase beta subunit.